Consider the following 299-residue polypeptide: Kynurenine formamidase-like hydrolase fscH (299 aa).

Residues 48-52 (HGGAW) carry the HGGXW motif. A disordered region spans residues 90–110 (SPRTPSQPVPSGGHVGGEQQA). S142 functions as the Nucleophile in the catalytic mechanism.

Belongs to the kynurenine formamidase family.

It participates in secondary metabolite biosynthesis. In terms of biological role, kynurenine formamidase-like hydrolase; part of the fragmented gene cluster that mediates the biosynthesis of fusarochromene, a tryptophan-derived metabolite closely related to a group of mycotoxins including fusarochromanone. Within the pathway, fscH converts the product of fscD into 4-hydroxykyrunenine. The first step of the pathway is the epimerization of L-tryptophan to D-tryptophan in the presence of the NRPS-like tryptophan epimerase fscC. D-tryptophan is subsequently hydroxylated by the tryptophan 6-hydroxylase fscE to yield 6-hydroxytryptophan. The pyrrole ring undergoes cleavaged by the tryptophan 2,3-dioxygenase fscD and is finally converted to 4-hydroxykyrunenine by the hydrolase fscH. The NRPS-like oxidoreductase fscA reduces the carboxyl group to primary alcohol and the DMATS-type prenyltransferase fscG performs prenylation, followed by the formation of a chromene ring catalyzed by the oxidoreductase fscI, which leads to desacetylfusarochromene. Epoxidation by fscF and rearrangement reactions of chromene double bonds convert compound desacetylfusarochromene to fusarochromanones. Although specific acetyltransferases were not found near the fsc gene cluster, several predicted enzymes containing the N-acetyltransferase superfamily domain are present in the genome of F.equiseti. These predicted enzymes may have the potential to convert desacetylfusarochromene to fusarochromene. The sequence is that of Kynurenine formamidase-like hydrolase fscH from Fusarium equiseti (Fusarium scirpi).